The chain runs to 361 residues: Tyrosine--tRNA ligase (361 aa).

L-tyrosine-binding residues include Y36, Y162, Q166, D169, and Q184. The 'KMSKS' region motif lies at 236–240; the sequence is KMSKS. K239 lines the ATP pocket.

This sequence belongs to the class-I aminoacyl-tRNA synthetase family. TyrS type 4 subfamily. Homodimer.

Its subcellular location is the cytoplasm. It carries out the reaction tRNA(Tyr) + L-tyrosine + ATP = L-tyrosyl-tRNA(Tyr) + AMP + diphosphate + H(+). In terms of biological role, catalyzes the attachment of tyrosine to tRNA(Tyr) in a two-step reaction: tyrosine is first activated by ATP to form Tyr-AMP and then transferred to the acceptor end of tRNA(Tyr). This is Tyrosine--tRNA ligase from Saccharolobus islandicus (strain M.14.25 / Kamchatka #1) (Sulfolobus islandicus).